The primary structure comprises 230 residues: MSNTPIELKGSSFTLSVVHLHDAHPEVIRKALEEKIAQAPAFLKNAPVVVNVAGLDGSINWQQLHQTFIDSGLHLVGISGCQDDALKAEISRAGLALLTEGKASAPRAAKPAETPAPPAAALRTRLIDLPVRSGQRIYAPGADLVVTSHVSAGAELIADGNIHVYGTMRGRALAGAGGDKEAQIFSTNLAAELVSIAGVYWLSDQIPAEFYNKAARLRLADGALTVQPLN.

This sequence belongs to the MinC family. Interacts with MinD and FtsZ.

Functionally, cell division inhibitor that blocks the formation of polar Z ring septums. Rapidly oscillates between the poles of the cell to destabilize FtsZ filaments that have formed before they mature into polar Z rings. Prevents FtsZ polymerization. In Cronobacter sakazakii (strain ATCC BAA-894) (Enterobacter sakazakii), this protein is Probable septum site-determining protein MinC.